Here is a 242-residue protein sequence, read N- to C-terminus: MNPADSDHPQLPNIKIHHPPSPRHSHHHHSSSTPSSAATPTPTAGARRKIGVAVDLSEESSFAVRWAVDHYIRPGDAVVLLHVSPTSVLFGADWGPLPLKTQIEDPNAQPQPSQEDFDAFTSTKVADLAKPLKELGFPYKIHIVKDHDMRERLCLEIERLGLSAVIMGSRGFGAEKKRGSDGKLGSVSDYCVHHCVCPVVVVRYPDDRDGPVPIVTVKSGGDDDGDVVAASASAHHEHIKDE.

The transit peptide at methionine 1–threonine 43 directs the protein to the chloroplast. A disordered region spans residues methionine 1–glycine 45. The span at lysine 15 to serine 30 shows a compositional bias: basic residues. Proline 19 serves as a coordination point for ATP. Phosphoserine; by MAPK3 and MAPK6 is present on serine 21. A compositionally biased stretch (low complexity) spans serine 31–alanine 44. Residues valine 83, glycine 168 to arginine 178, and serine 186 to serine 188 each bind ATP. The residue at position 219 (serine 219) is a Phosphoserine.

Belongs to the universal stress protein A family. In terms of processing, phosphorylated by MAPK3 and MAPK6 after pathogenic elicitation (e.g. bacterial flg22, Phytophthora infestans zoospores and xylanase).

The protein localises to the plastid. It localises to the chloroplast. This chain is Universal stress protein PHOS32, found in Arabidopsis thaliana (Mouse-ear cress).